The chain runs to 153 residues: Regulator of ribonuclease activity B (153 aa).

The segment at 114–153 (DPNADDDEYGDDGEFLDDEDEYGDDGEFFDDEDEEEPRVH) is disordered. The span at 115 to 153 (PNADDDEYGDDGEFLDDEDEYGDDGEFFDDEDEEEPRVH) shows a compositional bias: acidic residues.

It belongs to the RraB family. As to quaternary structure, interacts with the C-terminal region of Rne.

It localises to the cytoplasm. Globally modulates RNA abundance by binding to RNase E (Rne) and regulating its endonucleolytic activity. Can modulate Rne action in a substrate-dependent manner by altering the composition of the degradosome. This Haemophilus influenzae (strain ATCC 51907 / DSM 11121 / KW20 / Rd) protein is Regulator of ribonuclease activity B.